A 396-amino-acid polypeptide reads, in one-letter code: 1-deoxy-D-xylulose 5-phosphate reductoisomerase (396 aa).

NADPH-binding residues include threonine 15, glycine 16, isoleucine 18, and asparagine 127. Lysine 128 contacts 1-deoxy-D-xylulose 5-phosphate. Glutamate 129 provides a ligand contact to NADPH. Aspartate 153 lines the Mn(2+) pocket. 1-deoxy-D-xylulose 5-phosphate is bound by residues serine 154, glutamate 155, serine 177, and histidine 200. Residue glutamate 155 coordinates Mn(2+). Position 206 (glycine 206) interacts with NADPH. 1-deoxy-D-xylulose 5-phosphate-binding residues include serine 213, asparagine 218, lysine 219, and glutamate 222. A Mn(2+)-binding site is contributed by glutamate 222.

This sequence belongs to the DXR family. Mg(2+) serves as cofactor. Mn(2+) is required as a cofactor.

It catalyses the reaction 2-C-methyl-D-erythritol 4-phosphate + NADP(+) = 1-deoxy-D-xylulose 5-phosphate + NADPH + H(+). The protein operates within isoprenoid biosynthesis; isopentenyl diphosphate biosynthesis via DXP pathway; isopentenyl diphosphate from 1-deoxy-D-xylulose 5-phosphate: step 1/6. Its function is as follows. Catalyzes the NADPH-dependent rearrangement and reduction of 1-deoxy-D-xylulose-5-phosphate (DXP) to 2-C-methyl-D-erythritol 4-phosphate (MEP). This Anaplasma marginale (strain Florida) protein is 1-deoxy-D-xylulose 5-phosphate reductoisomerase.